The following is an 83-amino-acid chain: Cytochrome b559 subunit alpha (83 aa).

The helical transmembrane segment at 21–35 (VIHSITIPSLFIAGW) threads the bilayer. Histidine 23 lines the heme pocket.

It belongs to the PsbE/PsbF family. In terms of assembly, heterodimer of an alpha subunit and a beta subunit. PSII is composed of 1 copy each of membrane proteins PsbA, PsbB, PsbC, PsbD, PsbE, PsbF, PsbH, PsbI, PsbJ, PsbK, PsbL, PsbM, PsbT, PsbX, PsbY, PsbZ, Psb30/Ycf12, at least 3 peripheral proteins of the oxygen-evolving complex and a large number of cofactors. It forms dimeric complexes. Requires heme b as cofactor.

It localises to the plastid. The protein resides in the chloroplast thylakoid membrane. This b-type cytochrome is tightly associated with the reaction center of photosystem II (PSII). PSII is a light-driven water:plastoquinone oxidoreductase that uses light energy to abstract electrons from H(2)O, generating O(2) and a proton gradient subsequently used for ATP formation. It consists of a core antenna complex that captures photons, and an electron transfer chain that converts photonic excitation into a charge separation. The chain is Cytochrome b559 subunit alpha from Marchantia polymorpha (Common liverwort).